Consider the following 257-residue polypeptide: Phosphonates import ATP-binding protein PhnC (257 aa).

One can recognise an ABC transporter domain in the interval 4–248 (IEFKDVNKVY…VFNDIYGRKL (245 aa)). ATP is bound at residue 37 to 44 (GLSGAGKS).

This sequence belongs to the ABC transporter superfamily. Phosphonates importer (TC 3.A.1.9.1) family. In terms of assembly, the complex is composed of two ATP-binding proteins (PhnC), two transmembrane proteins (PhnE) and a solute-binding protein (PhnD).

The protein localises to the cell membrane. It catalyses the reaction phosphonate(out) + ATP + H2O = phosphonate(in) + ADP + phosphate + H(+). Part of the ABC transporter complex PhnCDE involved in phosphonates import. Responsible for energy coupling to the transport system. This Staphylococcus haemolyticus (strain JCSC1435) protein is Phosphonates import ATP-binding protein PhnC.